We begin with the raw amino-acid sequence, 341 residues long: Elongation factor Ts (341 aa).

The segment at 80-83 (TDFV) is involved in Mg(2+) ion dislocation from EF-Tu.

The protein belongs to the EF-Ts family.

It localises to the cytoplasm. Its function is as follows. Associates with the EF-Tu.GDP complex and induces the exchange of GDP to GTP. It remains bound to the aminoacyl-tRNA.EF-Tu.GTP complex up to the GTP hydrolysis stage on the ribosome. The sequence is that of Elongation factor Ts from Lactobacillus acidophilus (strain ATCC 700396 / NCK56 / N2 / NCFM).